Here is a 273-residue protein sequence, read N- to C-terminus: Patr class II histocompatibility antigen, DO beta chain (273 aa).

The N-terminal stretch at 1-26 is a signal peptide; sequence MGSGWVPWVVALLVNLTRLDSSMTQG. Positions 27–120 are beta-1; it reads TDSPEDFVIQ…LGAPFTVGRK (94 aa). Topologically, residues 27–224 are extracellular; it reads TDSPEDFVIQ…RAQSEYSWKK (198 aa). 2 disulfide bridges follow: Cys41-Cys105 and Cys143-Cys199. An N-linked (GlcNAc...) asparagine glycan is attached at Asn45. Residues 121–214 are beta-2; it reads VQPEVTVYPE…SLLSPVSVEW (94 aa). The Ig-like C1-type domain occupies 123 to 213; sequence PEVTVYPERT…SSLLSPVSVE (91 aa). Positions 215-224 are connecting peptide; it reads RAQSEYSWKK. The chain crosses the membrane as a helical span at residues 225–245; the sequence is MLSGIAAFLLGLIFLLVGIVI. At 246–273 the chain is on the cytoplasmic side; it reads QLRAQKGYVRTQMSGNEVSRAVLLPQSC.

This sequence belongs to the MHC class II family. Heterodimer of an alpha chain (DOA) and a beta chain (DOB). Forms a heterotetrameric complex with an HLA-DM molecule during intracellular transport in endosomal/lysosomal compartments in B-cells.

Its subcellular location is the endosome membrane. It localises to the lysosome membrane. Its function is as follows. Important modulator in the HLA class II restricted antigen presentation pathway by interaction with the HLA-DM molecule in B-cells. Modifies peptide exchange activity of HLA-DM. This chain is Patr class II histocompatibility antigen, DO beta chain (Patr-DOB), found in Pan troglodytes (Chimpanzee).